We begin with the raw amino-acid sequence, 175 residues long: VQ motif-containing protein 25 (175 aa).

The VQ motif lies at 50–59; that stretch reads FRELVQSLTG.

It localises to the nucleus. In terms of biological role, may function as negative regulator of plant defense. The polypeptide is VQ motif-containing protein 25 (Arabidopsis thaliana (Mouse-ear cress)).